Reading from the N-terminus, the 345-residue chain is GTPase Obg (345 aa).

Residues 1-159 form the Obg domain; sequence MKFIDEAIIK…RTLRLELKLL (159 aa). The segment at 127–148 is disordered; that stretch reads NARFKSSTNRAPRKTTQGKPGE. Positions 130–144 are enriched in polar residues; sequence FKSSTNRAPRKTTQG. One can recognise an OBG-type G domain in the interval 160-334; the sequence is ADVGLLGLPN…LIHAVMQYLE (175 aa). GTP is bound by residues 166–173, 191–195, 213–216, 284–287, and 315–317; these read GLPNAGKS, FTTLH, DIPG, NKTD, and SAL. Mg(2+)-binding residues include Ser-173 and Thr-193.

This sequence belongs to the TRAFAC class OBG-HflX-like GTPase superfamily. OBG GTPase family. As to quaternary structure, monomer. Mg(2+) is required as a cofactor.

The protein localises to the cytoplasm. Functionally, an essential GTPase which binds GTP, GDP and possibly (p)ppGpp with moderate affinity, with high nucleotide exchange rates and a fairly low GTP hydrolysis rate. Plays a role in control of the cell cycle, stress response, ribosome biogenesis and in those bacteria that undergo differentiation, in morphogenesis control. This Nitrosococcus oceani (strain ATCC 19707 / BCRC 17464 / JCM 30415 / NCIMB 11848 / C-107) protein is GTPase Obg.